The primary structure comprises 74 residues: MSEKFNFNQGLIDLEKIVKAMESGDLSLEDSLNHFSKGVELTKQCQSALNKAEQKISMLTEQDNYTNEKPLKRL.

The protein belongs to the XseB family. As to quaternary structure, heterooligomer composed of large and small subunits.

It is found in the cytoplasm. It catalyses the reaction Exonucleolytic cleavage in either 5'- to 3'- or 3'- to 5'-direction to yield nucleoside 5'-phosphates.. Functionally, bidirectionally degrades single-stranded DNA into large acid-insoluble oligonucleotides, which are then degraded further into small acid-soluble oligonucleotides. This Vesicomyosocius okutanii subsp. Calyptogena okutanii (strain HA) protein is Exodeoxyribonuclease 7 small subunit.